The following is a 942-amino-acid chain: DNA mismatch repair protein MutS (942 aa).

Residue 613–620 (GPNMAGKS) participates in ATP binding.

Belongs to the DNA mismatch repair MutS family.

Functionally, this protein is involved in the repair of mismatches in DNA. It is possible that it carries out the mismatch recognition step. This protein has a weak ATPase activity. The sequence is that of DNA mismatch repair protein MutS from Clostridium botulinum (strain Eklund 17B / Type B).